The following is a 109-amino-acid chain: Transcription initiation factor IIA subunit 2 (109 aa).

The protein belongs to the TFIIA subunit 2 family. As to quaternary structure, TFIIA is a heterodimer composed of the large toa1 and the small toa2 subunits.

It localises to the nucleus. Its subcellular location is the cytoplasm. Functionally, TFIIA is a component of the transcription machinery of RNA polymerase II and plays an important role in transcriptional activation. TFIIA in a complex with tbp mediates transcriptional activity. The chain is Transcription initiation factor IIA subunit 2 (toa2) from Schizosaccharomyces pombe (strain 972 / ATCC 24843) (Fission yeast).